The chain runs to 263 residues: MAPK-interacting and spindle-stabilizing protein (263 aa).

Residues 13 to 238 (GSPAPFLPSG…LGKQQGHNTT (226 aa)) form a disordered region. Pro residues-rich tracts occupy residues 14 to 34 (SPAPFLPSGPSCPQPSGPYPG) and 140 to 155 (GLQPSPNNPYPLPPGP). Over residues 156–165 (SAASPGPGSL) the composition is skewed to low complexity. Residues 176–189 (PSDSSNPESTLEST) are compositionally biased toward polar residues. Over residues 202-213 (IKRRRSKKKSKR) the composition is skewed to basic residues.

Belongs to the MISS family. As to quaternary structure, interacts with MAPK1. Phosphorylated in vitro by MAPK1.

It is found in the cytoplasm. Its subcellular location is the cytoskeleton. The protein localises to the spindle. Its function is as follows. Involved in the maintenance of the spindle integrity during the cytostatic factor (CSF) arrest of oocytes. In Mus musculus (Mouse), this protein is MAPK-interacting and spindle-stabilizing protein (Mapk1ip1).